Consider the following 292-residue polypeptide: tRNA (adenine(9)-N1)-methyltransferase (292 aa).

The SAM-dependent MTase TRM10-type domain maps to 72–253 (TFRKGGKKVS…ISLQSKSDKI (182 aa)).

Belongs to the class IV-like SAM-binding methyltransferase superfamily. TRM10 family.

The protein localises to the cytoplasm. The enzyme catalyses adenosine(9) in tRNA + S-adenosyl-L-methionine = N(1)-methyladenosine(9) in tRNA + S-adenosyl-L-homocysteine + H(+). Functionally, catalyzes the S-adenosyl-L-methionine-dependent formation of N(1)-methyladenine at position 9 (m1A9) in tRNA. This is tRNA (adenine(9)-N1)-methyltransferase from Sulfolobus acidocaldarius (strain ATCC 33909 / DSM 639 / JCM 8929 / NBRC 15157 / NCIMB 11770).